A 428-amino-acid polypeptide reads, in one-letter code: D-amino acid dehydrogenase (428 aa).

An FAD-binding site is contributed by 3–17 (VVILGSGVVGVASAY).

It belongs to the DadA oxidoreductase family. The cofactor is FAD.

The enzyme catalyses a D-alpha-amino acid + A + H2O = a 2-oxocarboxylate + AH2 + NH4(+). The protein operates within amino-acid degradation; D-alanine degradation; NH(3) and pyruvate from D-alanine: step 1/1. In terms of biological role, oxidative deamination of D-amino acids. The polypeptide is D-amino acid dehydrogenase (Burkholderia lata (strain ATCC 17760 / DSM 23089 / LMG 22485 / NCIMB 9086 / R18194 / 383)).